Here is a 140-residue protein sequence, read N- to C-terminus: Histone H2B (140 aa).

The span at 1-10 shows a compositional bias: basic and acidic residues; that stretch reads MPPKAAEKKP. The tract at residues 1 to 48 is disordered; the sequence is MPPKAAEKKPSTGGKAPAGKAPAEKKEAGKKTAAAASGEKKKRGKTRK. N6-acetyllysine; alternate occurs at positions 8 and 9. Glycyl lysine isopeptide (Lys-Gly) (interchain with G-Cter in SUMO); alternate cross-links involve residues Lys-8 and Lys-9. Residues 11 to 21 show a composition bias toward low complexity; the sequence is STGGKAPAGKA. Lys-15 is modified (N6-acetyllysine). Lys-25 carries the N6-acetyllysine; alternate modification. Residue Lys-25 forms a Glycyl lysine isopeptide (Lys-Gly) (interchain with G-Cter in SUMO); alternate linkage. Lys-26 participates in a covalent cross-link: Glycyl lysine isopeptide (Lys-Gly) (interchain with G-Cter in SUMO). Residue Lys-134 forms a Glycyl lysine isopeptide (Lys-Gly) (interchain with G-Cter in ubiquitin) linkage.

Belongs to the histone H2B family. The nucleosome is a histone octamer containing two molecules each of H2A, H2B, H3 and H4 assembled in one H3-H4 heterotetramer and two H2A-H2B heterodimers. The octamer wraps approximately 147 bp of DNA. Monoubiquitinated by the ubc2-bre1 complex to form H2BK123ub1. H2BK123ub1 gives a specific tag for epigenetic transcriptional activation and is also prerequisite for H3K4me and H3K79me formation. H2BK123ub1 also modulates the formation of double-strand breaks during meiosis and is a prerequisite for DNA-damage checkpoint activation. Post-translationally, acetylated by gcn5 to form H2BK11ac and H2BK16ac. H2BK16ac can also be formed by esa1. Acetylation of N-terminal lysines and particularly formation of H2BK11acK16ac has a positive effect on transcription. In terms of processing, sumoylation to form H2BK6su or H2BK7su, and probably also H2BK16su or H2BK17su, occurs preferentially near the telomeres and represses gene transcription.

It localises to the nucleus. Its subcellular location is the chromosome. In terms of biological role, core component of nucleosome. Nucleosomes wrap and compact DNA into chromatin, limiting DNA accessibility to the cellular machineries which require DNA as a template. Histones thereby play a central role in transcription regulation, DNA repair, DNA replication and chromosomal stability. DNA accessibility is regulated via a complex set of post-translational modifications of histones, also called histone code, and nucleosome remodeling. The sequence is that of Histone H2B (htbA) from Emericella nidulans (strain FGSC A4 / ATCC 38163 / CBS 112.46 / NRRL 194 / M139) (Aspergillus nidulans).